We begin with the raw amino-acid sequence, 168 residues long: SPbeta prophage-derived uncharacterized protein YomW (168 aa).

The sequence is that of SPbeta prophage-derived uncharacterized protein YomW (yomW) from Bacillus subtilis (strain 168).